The chain runs to 170 residues: Translationally-controlled tumor protein homolog (170 aa).

The TCTP domain maps to 1 to 170 (MLIYNDILNG…WKHGLKETKV (170 aa)).

This sequence belongs to the TCTP family.

It localises to the cytoplasm. It is found in the cytoskeleton. Functionally, involved in protein synthesis. Involved in microtubule stabilization. This chain is Translationally-controlled tumor protein homolog, found in Gibberella zeae (strain ATCC MYA-4620 / CBS 123657 / FGSC 9075 / NRRL 31084 / PH-1) (Wheat head blight fungus).